The following is a 331-amino-acid chain: Ribosomal RNA small subunit methyltransferase C (331 aa).

It belongs to the methyltransferase superfamily. RsmC family. Monomer.

Its subcellular location is the cytoplasm. The catalysed reaction is guanosine(1207) in 16S rRNA + S-adenosyl-L-methionine = N(2)-methylguanosine(1207) in 16S rRNA + S-adenosyl-L-homocysteine + H(+). In terms of biological role, specifically methylates the guanine in position 1207 of 16S rRNA in the 30S particle. In Ectopseudomonas mendocina (strain ymp) (Pseudomonas mendocina), this protein is Ribosomal RNA small subunit methyltransferase C.